The sequence spans 434 residues: D-amino acid dehydrogenase (434 aa).

FAD is bound at residue 3–17; it reads VIVLGSGVIGTTTAY.

It belongs to the DadA oxidoreductase family. It depends on FAD as a cofactor.

The enzyme catalyses a D-alpha-amino acid + A + H2O = a 2-oxocarboxylate + AH2 + NH4(+). Its function is as follows. Oxidative deamination of D-amino acids. The sequence is that of D-amino acid dehydrogenase from Bordetella bronchiseptica (strain ATCC BAA-588 / NCTC 13252 / RB50) (Alcaligenes bronchisepticus).